The chain runs to 197 residues: Small ribosomal subunit protein uS4B (197 aa).

Residues 88-150 (SRLDNMVYRM…SRKTEMFVNN (63 aa)) form the S4 RNA-binding domain.

This sequence belongs to the universal ribosomal protein uS4 family. In terms of assembly, part of the 30S ribosomal subunit. Contacts protein S5. The interaction surface between S4 and S5 is involved in control of translational fidelity.

One of the primary rRNA binding proteins, it binds directly to 16S rRNA where it nucleates assembly of the body of the 30S subunit. Functionally, with S5 and S12 plays an important role in translational accuracy. This Clostridium perfringens (strain 13 / Type A) protein is Small ribosomal subunit protein uS4B (rpsD2).